The sequence spans 257 residues: UPF0246 protein Ssed_1188 (257 aa).

This sequence belongs to the UPF0246 family.

The polypeptide is UPF0246 protein Ssed_1188 (Shewanella sediminis (strain HAW-EB3)).